Here is a 249-residue protein sequence, read N- to C-terminus: 2,3-bisphosphoglycerate-dependent phosphoglycerate mutase 2 (249 aa).

Substrate-binding positions include 8–15 (RHGESIWN), 21–22 (TG), arginine 60, 87–90 (ERHY), lysine 98, 114–115 (RR), and 183–184 (GN). Histidine 9 functions as the Tele-phosphohistidine intermediate in the catalytic mechanism. The active-site Proton donor/acceptor is glutamate 87.

This sequence belongs to the phosphoglycerate mutase family. BPG-dependent PGAM subfamily. As to quaternary structure, homodimer.

It catalyses the reaction (2R)-2-phosphoglycerate = (2R)-3-phosphoglycerate. Its pathway is carbohydrate degradation; glycolysis; pyruvate from D-glyceraldehyde 3-phosphate: step 3/5. Its function is as follows. Catalyzes the interconversion of 2-phosphoglycerate and 3-phosphoglycerate. In Nitrosomonas europaea (strain ATCC 19718 / CIP 103999 / KCTC 2705 / NBRC 14298), this protein is 2,3-bisphosphoglycerate-dependent phosphoglycerate mutase 2.